The chain runs to 249 residues: DNA repair protein RecO (249 aa).

The protein belongs to the RecO family.

In terms of biological role, involved in DNA repair and RecF pathway recombination. This Lawsonia intracellularis (strain PHE/MN1-00) protein is DNA repair protein RecO.